Reading from the N-terminus, the 335-residue chain is Anthranilate phosphoribosyltransferase 2 (335 aa).

Residues Gly-70, 73-74 (GD), Thr-78, 80-83 (NIST), 98-106 (KHGNRSASS), and Ser-110 contribute to the 5-phospho-alpha-D-ribose 1-diphosphate site. Gly-70 contacts anthranilate. Mg(2+) is bound at residue Ser-82. Asn-101 is an anthranilate binding site. Arg-156 is an anthranilate binding site. Positions 215 and 216 each coordinate Mg(2+).

This sequence belongs to the anthranilate phosphoribosyltransferase family. In terms of assembly, homodimer. The cofactor is Mg(2+).

It catalyses the reaction N-(5-phospho-beta-D-ribosyl)anthranilate + diphosphate = 5-phospho-alpha-D-ribose 1-diphosphate + anthranilate. Its pathway is amino-acid biosynthesis; L-tryptophan biosynthesis; L-tryptophan from chorismate: step 2/5. Its function is as follows. Catalyzes the transfer of the phosphoribosyl group of 5-phosphorylribose-1-pyrophosphate (PRPP) to anthranilate to yield N-(5'-phosphoribosyl)-anthranilate (PRA). In Streptomyces coelicolor (strain ATCC BAA-471 / A3(2) / M145), this protein is Anthranilate phosphoribosyltransferase 2.